A 627-amino-acid polypeptide reads, in one-letter code: Spindle assembly abnormal protein 6 homolog (627 aa).

The 53-residue stretch at 39-91 (VHRKDLVVRLTDDTDLYFLYNLIISEEDFQSLKVQQGLLIDFTSFPQKFIDLL) folds into the PISA domain. Positions 153 to 473 (LASCLSSVKE…SREVLKTNEN (321 aa)) form a coiled coil. 2 disordered regions span residues 187–257 (QTLS…LQTK) and 561–586 (EVSPAAFSQPANKENSEPVGLDSKYF). The span at 191 to 201 (EKSRELDKLRS) shows a compositional bias: basic and acidic residues. The span at 202-213 (EWTSQTTSLSSR) shows a compositional bias: polar residues. Basic and acidic residues predominate over residues 214–226 (HMQDLTAEREKAL). Positions 229–238 (QSRLQQQNEQ) are enriched in low complexity.

As to quaternary structure, nine homodimers form a cartwheel structure with an internal diameter of 23 nM and radial spokes connecting to the microtubule triplets.

The protein localises to the cytoplasm. It localises to the cytoskeleton. It is found in the microtubule organizing center. The protein resides in the centrosome. Functionally, central scaffolding component of the centrioles ensuring their 9-fold symmetry. Required for centrosome biogenesis and duplication: required both for mother-centriole-dependent centriole duplication and deuterosome-dependent centriole amplification in multiciliated cells. The protein is Spindle assembly abnormal protein 6 homolog (sass6) of Danio rerio (Zebrafish).